A 955-amino-acid polypeptide reads, in one-letter code: Leucine--tRNA ligase (955 aa).

The short motif at Pro-51–His-61 is the 'HIGH' region element. Positions Lys-647–Ser-651 match the 'KMSKS' region motif. Lys-650 provides a ligand contact to ATP.

The protein belongs to the class-I aminoacyl-tRNA synthetase family.

The protein resides in the cytoplasm. It catalyses the reaction tRNA(Leu) + L-leucine + ATP = L-leucyl-tRNA(Leu) + AMP + diphosphate. This is Leucine--tRNA ligase from Methanococcus maripaludis (strain C7 / ATCC BAA-1331).